A 247-amino-acid chain; its full sequence is Chymase (247 aa).

Residues 1 to 19 form the signal peptide; that stretch reads MLLLPLPLLLLFLCSRAEA. The propeptide at 20-21 is activation peptide; it reads GE. In terms of domain architecture, Peptidase S1 spans 22–245; that stretch reads IIGGTECKPH…YRPWINKILQ (224 aa). Cys-51 and Cys-67 form a disulfide bridge. His-66 functions as the Charge relay system in the catalytic mechanism. Residues Asn-80 and Asn-103 are each glycosylated (N-linked (GlcNAc...) asparagine). Asp-110 (charge relay system) is an active-site residue. 2 disulfides stabilise this stretch: Cys-144-Cys-209 and Cys-175-Cys-188. Ser-203 (charge relay system) is an active-site residue.

It belongs to the peptidase S1 family. Granzyme subfamily.

The protein localises to the secreted. It is found in the cytoplasmic granule. It carries out the reaction Preferential cleavage: Phe-|-Xaa &gt; Tyr-|-Xaa &gt; Trp-|-Xaa &gt; Leu-|-Xaa.. Major secreted protease of mast cells with suspected roles in vasoactive peptide generation, extracellular matrix degradation, and regulation of gland secretion. The protein is Chymase (CMA1) of Papio hamadryas (Hamadryas baboon).